The primary structure comprises 420 residues: Deoxyribodipyrimidine photo-lyase (420 aa).

The Photolyase/cryptochrome alpha/beta domain occupies 2–124; the sequence is GPLLVWHRGD…PLHLLPAPHL (123 aa). Positions 152–175 are disordered; that stretch reads APEALPKGPEEGEIPREDPGLPLP. Residues 159-170 are compositionally biased toward basic and acidic residues; sequence GPEEGEIPREDP. Tyr-197 is an FAD binding site. DNA is bound at residue Arg-201. 209–213 is an FAD binding site; that stretch reads GSRLS. 2 interaction with DNA regions span residues 244–251 and 310–311; these read ELLWRDFS and NR. 341–343 contacts FAD; it reads DGD. Gln-373 contacts DNA.

It belongs to the DNA photolyase class-1 family. As to quaternary structure, monomer. It depends on FAD as a cofactor.

The catalysed reaction is cyclobutadipyrimidine (in DNA) = 2 pyrimidine residues (in DNA).. Involved in repair of UV radiation-induced DNA damage. Catalyzes the light-dependent monomerization (300-600 nm) of cyclobutyl pyrimidine dimers (in cis-syn configuration), which are formed between adjacent bases on the same DNA strand upon exposure to ultraviolet radiation. The sequence is that of Deoxyribodipyrimidine photo-lyase (phr) from Thermus thermophilus (strain ATCC BAA-163 / DSM 7039 / HB27).